A 967-amino-acid polypeptide reads, in one-letter code: Leucine-rich repeat receptor-like protein kinase PXC2 (967 aa).

Residues 1–20 (MFNGAVSLLFLFLAVVSARA) form the signal peptide. Topologically, residues 21 to 609 (DPTFNDDVLG…QIRKSVLSIS (589 aa)) are extracellular. LRR repeat units follow at residues 91 to 114 (LQFL…EFPH), 115 to 139 (LGSL…FFEQ), 141 to 164 (GSLR…LSYC), 165 to 189 (STLT…WFLK), 191 to 212 (LKSL…LGGL), 214 to 236 (DLRH…IGRC), 237 to 260 (SSLK…MKSL), 262 to 284 (SCSS…IGDI), 285 to 307 (ATLE…SLGN), 308 to 332 (LEFL…LSNC), and 334 to 356 (NLIS…MFTG). N-linked (GlcNAc...) asparagine glycans are attached at residues N103 and N127. N171 carries an N-linked (GlcNAc...) asparagine glycan. N-linked (GlcNAc...) asparagine glycosylation occurs at N219. N296, N315, and N331 each carry an N-linked (GlcNAc...) asparagine glycan. N374 carries N-linked (GlcNAc...) asparagine glycosylation. LRR repeat units follow at residues 384-408 (LQGL…IWIL), 410-432 (SLLQ…IGGL), 433-456 (KVAE…IGGA), 457-480 (VSLK…ISNC), 482-503 (ALNT…SIGS), 504-528 (LSNL…IEKL), and 530-552 (HLLT…GFFN). N415, N446, N479, N487, N516, N535, N540, N571, and N587 each carry an N-linked (GlcNAc...) asparagine glycan. The helical transmembrane segment at 610-630 (ALIAIGAAAVIAIGVVAVTLL) threads the bilayer. Over 631–967 (NVHARSSVSR…LIQCPSHDLE (337 aa)) the chain is Cytoplasmic. A Protein kinase domain is found at 687–959 (LNKDSELGRG…EEVVKILELI (273 aa)). ATP-binding positions include 693-701 (LGRGGFGVV) and K715.

This sequence belongs to the protein kinase superfamily. Ser/Thr protein kinase family. Expressed in the vascular strands of cotyledons, the shoot apex, hypocotyls, roots, leaves, stems and flowers.

Its subcellular location is the cell membrane. Leucine-rich repeat receptor-like protein kinase that may play a role in vascular tissues development. This is Leucine-rich repeat receptor-like protein kinase PXC2 from Arabidopsis thaliana (Mouse-ear cress).